The chain runs to 379 residues: Mannitol-1-phosphate 5-dehydrogenase (379 aa).

3–14 (ALHFGAGNIGRG) lines the NAD(+) pocket.

The protein belongs to the mannitol dehydrogenase family.

The catalysed reaction is D-mannitol 1-phosphate + NAD(+) = beta-D-fructose 6-phosphate + NADH + H(+). The polypeptide is Mannitol-1-phosphate 5-dehydrogenase (Bacillus licheniformis (strain ATCC 14580 / DSM 13 / JCM 2505 / CCUG 7422 / NBRC 12200 / NCIMB 9375 / NCTC 10341 / NRRL NRS-1264 / Gibson 46)).